Reading from the N-terminus, the 1027-residue chain is Circadian locomoter output cycles protein kaput (1027 aa).

The region spanning 15-65 is the bHLH domain; sequence LCRKSRNLSEKKRRDQFNSLVNDLSALISTSSRKMDKSTVLKSTIAFLKNH. 2 consecutive PAS domains span residues 88-160 and 255-321; these read NDEY…VIEP and REMS…ELRQ. Disordered regions lie at residues 377-402, 443-575, 765-800, 869-911, and 926-1027; these read RKEGQKSGNSNSITNNGSSKVIASTG, TSPA…QQLQ, QQMMMQQQQNLHTQHQHNLQQQHQSHSQLQQHTQQQ, TINP…NNED, and SINF…GSSQ. Residues 383–402 show a composition bias toward low complexity; sequence SGNSNSITNNGSSKVIASTG. The span at 443–486 shows a compositional bias: polar residues; that stretch reads TSPAVDSSPMWSASAVQPSGSCQINPLKTSRPASSYGNISSTGI. Composition is skewed to low complexity over residues 504–516 and 552–575; these read SDSTSMSTDSVTS and QQQQQHQNQQQQHQQHQQLQQQLQ. Residues 780 to 1027 form an implicated in the circadian rhythmicity region; sequence QHNLQQQHQS…SPHTAPGSSQ (248 aa). Low complexity-rich tracts occupy residues 871-909 and 951-995; these read NPFNSSSNNNNQSYNGGSNLNNGNQNNNNRSSNPPQNNN and SGSN…NQNQ. Residues 1006–1027 show a composition bias toward polar residues; the sequence is QMSQEQSQNLFNSPHTAPGSSQ.

Efficient DNA binding requires dimerization with another bHLH protein. Forms a heterodimer with Cycle. As to expression, widely expressed. Found in head, body, and appendage fractions.

Its subcellular location is the nucleus. Functionally, circadian regulator that acts as a transcription factor and generates a rhythmic output with a period of about 24 hours. Oscillates in antiphase to the cycling observed for period (PER) and timeless (TIM). According to PubMed:9742131, reaches peak abundance within several hours of the dark-light transition at ZT0 (zeitgeber 0), whereas PubMed:9616122 describes bimodal oscillating expression with maximum at ZT5 and ZT23. Clock-cycle heterodimers activate cycling transcription of PER and TIM by binding to the E-box (5'-CACGTG-3') present in their promoters. Once induced, Period and Timeless block Clock's ability to transactivate their promoters. This Drosophila melanogaster (Fruit fly) protein is Circadian locomoter output cycles protein kaput (Clk).